We begin with the raw amino-acid sequence, 462 residues long: Semenogelin-1 (462 aa).

A signal peptide spans 1–23 (MKPNIIFVLSLLLILEKQAAVMG). Gln24 is subject to Pyrrolidone carboxylic acid. Residues 24–61 (QKGGSKGRLPSEFSQFPHGQKGQHYSGQKGKQQTESKG) form a disordered region. Over residues 46-61 (QHYSGQKGKQQTESKG) the composition is skewed to polar residues. Repeat copies occupy residues 70-129 (HVDA…VVIH), 141-200 (NPSQ…QTEE), and 201-260 (LVAN…QDEL). A repeat-rich region region spans residues 70–439 (HVDANDHDQS…SHGGLDIVII (370 aa)). Disordered stretches follow at residues 131 to 157 (KGGKAHRGTQNPSQDQGNSPSGKGISS) and 173 to 194 (KEQTSVSGAQKGRKQGGSQSSY). A compositionally biased stretch (polar residues) spans 138-157 (GTQNPSQDQGNSPSGKGISS). The segment at 164 to 283 (ERLWVHGLSK…NQDQQHGRKA (120 aa)) is interaction with EPPIN. The segment at 261–380 (LVYNKNQHQT…QRSIYSQTEK (120 aa)) is 2 X 60 AA tandem repeats, type 1. The interval 270–432 (TKNLNQDQQH…KGRHQHGSHG (163 aa)) is disordered. Composition is skewed to polar residues over residues 308 to 317 (DVSQSSIYSQ), 324 to 335 (GKSQKQITIPSQ), and 343 to 352 (ANKISYQSSS). One copy of the 3-2 repeat lies at 381 to 439 (LVAGKSQIQAPNPKQEPWHGENAKGESGQSTNREQDLLSHEQKGRHQHGSHGGLDIVII). Positions 413–424 (REQDLLSHEQKG) are enriched in basic and acidic residues.

The protein belongs to the semenogelin family. Occurs in disulfide-linked complexes which may also contain two less abundant 71- and 76-kDa semenogelin-related polypeptides. Interacts with EPPIN (via C-terminus); Cys-239 is a critical amino acid for both binding to EPPIN. Post-translationally, transglutaminase substrate. Rapidly cleaved after ejaculation by KLK3/PSA, resulting in liquefaction of the semen coagulum and the progressive release of motile spermatozoa. In terms of tissue distribution, seminal vesicle.

Its subcellular location is the secreted. Its function is as follows. Predominant protein in semen. It participates in the formation of a gel matrix entrapping the accessory gland secretions and ejaculated spermatozoa. Fragments of semenogelin and/or fragments of the related proteins may contribute to the activation of progressive sperm movements as the gel-forming proteins are fragmented by KLK3/PSA. Functionally, alpha-inhibin-92 and alpha-inhibin-31, derived from the proteolytic degradation of semenogelin, inhibit the secretion of pituitary follicle-stimulating hormone. This is Semenogelin-1 (SEMG1) from Homo sapiens (Human).